Consider the following 472-residue polypeptide: Homeobox protein PKNOX2 (472 aa).

The interval methionine 1–aspartate 62 is disordered. A compositionally biased stretch (polar residues) spans aspartate 26–serine 38. Over residues serine 46–valine 56 the composition is skewed to low complexity. Residues glycine 96–aspartate 179 form the MEIS N-terminal domain. The homeobox DNA-binding region spans lysine 291–methionine 350. 3 disordered regions span residues leucine 351–proline 371, glutamine 386–leucine 405, and alanine 423–valine 472. Residues lysine 361–proline 371 are compositionally biased toward basic residues. Residues proline 396–leucine 405 are compositionally biased toward polar residues. A compositionally biased stretch (acidic residues) spans leucine 429–glutamate 454.

Belongs to the TALE/MEIS homeobox family.

Its subcellular location is the nucleus. This is Homeobox protein PKNOX2 (PKNOX2) from Pongo abelii (Sumatran orangutan).